Here is a 448-residue protein sequence, read N- to C-terminus: Phosphoglucosamine mutase (448 aa).

Ser102 acts as the Phosphoserine intermediate in catalysis. Ser102, Asp242, Asp244, and Asp246 together coordinate Mg(2+). Ser102 carries the phosphoserine modification.

This sequence belongs to the phosphohexose mutase family. It depends on Mg(2+) as a cofactor. In terms of processing, activated by phosphorylation.

It catalyses the reaction alpha-D-glucosamine 1-phosphate = D-glucosamine 6-phosphate. Functionally, catalyzes the conversion of glucosamine-6-phosphate to glucosamine-1-phosphate. The chain is Phosphoglucosamine mutase from Brevibacillus brevis (strain 47 / JCM 6285 / NBRC 100599).